We begin with the raw amino-acid sequence, 444 residues long: Proline--tRNA ligase (444 aa).

The protein belongs to the class-II aminoacyl-tRNA synthetase family. ProS type 2 subfamily. Homodimer.

It localises to the cytoplasm. The enzyme catalyses tRNA(Pro) + L-proline + ATP = L-prolyl-tRNA(Pro) + AMP + diphosphate. Its function is as follows. Catalyzes the attachment of proline to tRNA(Pro) in a two-step reaction: proline is first activated by ATP to form Pro-AMP and then transferred to the acceptor end of tRNA(Pro). The protein is Proline--tRNA ligase of Pelagibacter ubique (strain HTCC1062).